A 427-amino-acid chain; its full sequence is Glutamate-1-semialdehyde 2,1-aminomutase (427 aa).

K265 carries the N6-(pyridoxal phosphate)lysine modification.

This sequence belongs to the class-III pyridoxal-phosphate-dependent aminotransferase family. HemL subfamily. As to quaternary structure, homodimer. It depends on pyridoxal 5'-phosphate as a cofactor.

The protein localises to the cytoplasm. It carries out the reaction (S)-4-amino-5-oxopentanoate = 5-aminolevulinate. The protein operates within porphyrin-containing compound metabolism; protoporphyrin-IX biosynthesis; 5-aminolevulinate from L-glutamyl-tRNA(Glu): step 2/2. In Pseudomonas paraeruginosa (strain DSM 24068 / PA7) (Pseudomonas aeruginosa (strain PA7)), this protein is Glutamate-1-semialdehyde 2,1-aminomutase.